The sequence spans 953 residues: Isoleucine--tRNA ligase (953 aa).

Residues 58 to 68 carry the 'HIGH' region motif; the sequence is PYANGSIHIGH. Glu-577 provides a ligand contact to L-isoleucyl-5'-AMP. The 'KMSKS' region signature appears at 618–622; it reads KMSKS. Lys-621 is an ATP binding site. Zn(2+)-binding residues include Cys-916, Cys-919, Cys-936, and Cys-939.

This sequence belongs to the class-I aminoacyl-tRNA synthetase family. IleS type 1 subfamily. In terms of assembly, monomer. Zn(2+) is required as a cofactor.

Its subcellular location is the cytoplasm. The enzyme catalyses tRNA(Ile) + L-isoleucine + ATP = L-isoleucyl-tRNA(Ile) + AMP + diphosphate. Functionally, catalyzes the attachment of isoleucine to tRNA(Ile). As IleRS can inadvertently accommodate and process structurally similar amino acids such as valine, to avoid such errors it has two additional distinct tRNA(Ile)-dependent editing activities. One activity is designated as 'pretransfer' editing and involves the hydrolysis of activated Val-AMP. The other activity is designated 'posttransfer' editing and involves deacylation of mischarged Val-tRNA(Ile). The protein is Isoleucine--tRNA ligase of Aeromonas salmonicida (strain A449).